A 2893-amino-acid polypeptide reads, in one-letter code: Genome polyprotein (2893 aa).

A disordered region spans residues 206 to 226 (VQAKPEMDNPNPGPDGEGEVE). One can recognise an SF3 helicase domain in the interval 1446-1612 (SKLKTDLMEM…EEKKRGCKHC (167 aa)). Residue 1472–1479 (GASGIGKS) coordinates ATP. The region spanning 2119 to 2345 (GSTQQVDAAV…VAEPLVHEMF (227 aa)) is the Peptidase C3 domain. Residues histidine 2170, asparagine 2227, and cysteine 2307 each act as for 3C-like protease activity in the active site. The 131-residue stretch at 2633 to 2763 (THIVTGDYKN…NVSDNMIDKF (131 aa)) folds into the RdRp catalytic domain.

In terms of processing, specific enzymatic cleavages in vivo by the viral 3C-like protease yield three mature proteins. 3C-like protease is cleaved autocatalytically.

It is found in the virion. It carries out the reaction RNA(n) + a ribonucleoside 5'-triphosphate = RNA(n+1) + diphosphate. The catalysed reaction is ATP + H2O = ADP + phosphate + H(+). Its activity is regulated as follows. Inhibited by Rupintrivir. Its function is as follows. Capsid protein that assembles with the capsid proteins VP1 and VP3 to form a pseudo-T3 icosahedral capsid of about 40 nm. Capsid protein that assembles with the capsid proteins VP1 and VP2 to form a pseudo T3 icosahedral capsid of about 40 nm. Functionally, capsid protein that assembles with the capsid proteins VP2 and VP3 to form a pseudo T3 icosahedral capsid of about 40 nm. In terms of biological role, displays RNA helix destabilizing and strand annealing acceleration activity. This activity is necessary at several points during genome replication, for example to separate duplexes that form after genome replication. Its function is as follows. Cysteine protease that generates mature viral proteins from the precursor polyprotein. Replicates genomic and antigenomic RNA. This is Genome polyprotein from Deformed wing virus (DWV).